A 248-amino-acid polypeptide reads, in one-letter code: UPF0246 protein MYPE6270 (248 aa).

It belongs to the UPF0246 family.

The chain is UPF0246 protein MYPE6270 from Malacoplasma penetrans (strain HF-2) (Mycoplasma penetrans).